A 190-amino-acid chain; its full sequence is Putative manganese efflux pump MntP (190 aa).

A run of 6 helical transmembrane segments spans residues 3-23, 37-57, 72-88, 111-131, 138-158, and 164-184; these read FLQI…CSVV, LVLA…GWFI, HWIA…KMIW, IILG…LAFV, VALS…WIGH, and FGKW…ANIV.

It belongs to the MntP (TC 9.B.29) family.

The protein resides in the cell membrane. In terms of biological role, probably functions as a manganese efflux pump. In Corynebacterium glutamicum (strain ATCC 13032 / DSM 20300 / JCM 1318 / BCRC 11384 / CCUG 27702 / LMG 3730 / NBRC 12168 / NCIMB 10025 / NRRL B-2784 / 534), this protein is Putative manganese efflux pump MntP.